The chain runs to 501 residues: UDP-N-acetylmuramoyl-L-alanyl-D-glutamate--2,6-diaminopimelate ligase (501 aa).

UDP-N-acetyl-alpha-D-muramoyl-L-alanyl-D-glutamate is bound by residues Leu-26, Ser-28, and 43-45; that span reads HQC. Residue 123 to 129 participates in ATP binding; it reads GTNGKTT. UDP-N-acetyl-alpha-D-muramoyl-L-alanyl-D-glutamate is bound by residues Asn-164, 165 to 166, Ser-192, Gln-198, and Arg-200; that span reads TT. Residue Lys-232 is modified to N6-carboxylysine. Meso-2,6-diaminopimelate-binding positions include Arg-398, 422–425, Gly-473, and Glu-477; that span reads DNPR. The short motif at 422–425 is the Meso-diaminopimelate recognition motif element; sequence DNPR.

Belongs to the MurCDEF family. MurE subfamily. Requires Mg(2+) as cofactor. In terms of processing, carboxylation is probably crucial for Mg(2+) binding and, consequently, for the gamma-phosphate positioning of ATP.

The protein localises to the cytoplasm. It catalyses the reaction UDP-N-acetyl-alpha-D-muramoyl-L-alanyl-D-glutamate + meso-2,6-diaminopimelate + ATP = UDP-N-acetyl-alpha-D-muramoyl-L-alanyl-gamma-D-glutamyl-meso-2,6-diaminopimelate + ADP + phosphate + H(+). The protein operates within cell wall biogenesis; peptidoglycan biosynthesis. Its function is as follows. Catalyzes the addition of meso-diaminopimelic acid to the nucleotide precursor UDP-N-acetylmuramoyl-L-alanyl-D-glutamate (UMAG) in the biosynthesis of bacterial cell-wall peptidoglycan. The chain is UDP-N-acetylmuramoyl-L-alanyl-D-glutamate--2,6-diaminopimelate ligase from Haemophilus ducreyi (strain 35000HP / ATCC 700724).